Here is a 5654-residue protein sequence, read N- to C-terminus: Mucin-5AC (5654 aa).

Residues 1-27 (MSVGRRKLALLWALALALACTRHTGHA) form the signal peptide. The segment at 27 to 49 (AQDGSSESSYKHHPALSPIARGP) is disordered. Residues 79–249 (RVCSTWGSFH…KMDDPTDQCQ (171 aa)) enclose the VWFD 1 domain. Intrachain disulfides connect Cys-81-Cys-211 and Cys-103-Cys-248. Glu-198 contacts Cu(2+). N-linked (GlcNAc...) asparagine glycosylation is found at Asn-205 and Asn-258. His-320 and His-367 together coordinate Cu(2+). A TIL 1 domain is found at 338–394 (CPNNMQYHECRSPCADTCSNQEHSRACEDHCVAGCFCPEGTVLDDIGQTGCVPVSKC). The VWFC 1 domain maps to 394–465 (CACVYNGAAY…CSYVLTKPCD (72 aa)). N-linked (GlcNAc...) asparagine glycosylation is present at Asn-415. Residues 432–607 (GTCSVLGGAH…NTFKTQAACP (176 aa)) form the VWFD 2 domain. 3 cysteine pairs are disulfide-bonded: Cys-434–Cys-571, Cys-456–Cys-606, and Cys-478–Cys-486. N-linked (GlcNAc...) asparagine glycosylation is present at Asn-524. 2 TIL domains span residues 704–761 (CPKS…ASNC) and 818–863 (DTGA…AEDC). The VWFD 3 domain maps to 901–1072 (ATCAVYGDGH…NSWKLSPSCP (172 aa)). Intrachain disulfides connect Cys-903–Cys-1036, Cys-925–Cys-1071, Cys-934–Cys-1033, and Cys-953–Cys-960. Residue Asn-1308 is glycosylated (N-linked (GlcNAc...) asparagine). Residues 1336–1377 (LVVSSTHTPSNGPSSAHTGPPSSAWPTTAGTSPRTRLPTASA) are disordered. A compositionally biased stretch (polar residues) spans 1338–1377 (VSSTHTPSNGPSSAHTGPPSSAWPTTAGTSPRTRLPTASA). The stretch at 1383–1481 (CGEKCLWSPW…RVQCCTPLPC (99 aa)) is one Cys-rich subdomain 1 repeat. The 9 X Cys-rich subdomain repeats stretch occupies residues 1383 to 4731 (CGEKCLWSPW…VLCCETPRGC (3349 aa)). C-linked (Man) tryptophan glycosylation occurs at Trp-1389. Low complexity-rich tracts occupy residues 1483 to 1539 (TSSS…TFST) and 1547 to 1575 (ATSTSSMSTTAPGTSVVSSKPTPTEPSTS). Positions 1483–1575 (TSSSPAQTTP…KPTPTEPSTS (93 aa)) are disordered. A Cys-rich subdomain 2 repeat occupies 1577–1677 (CLQELCTWTE…IQCCETVNVC (101 aa)). Residue Trp-1584 is glycosylated (C-linked (Man) tryptophan). Residues 1688-1733 (ATTRPTPHPTGAQTQTTFTTHMPSASTEQPTATSRGGPTATSVTQG) are disordered. Residues 1697 to 1707 (TGAQTQTTFTT) are compositionally biased toward low complexity. The segment covering 1708–1733 (HMPSASTEQPTATSRGGPTATSVTQG) has biased composition (polar residues). The stretch at 1743–1847 (CHPRCTWTKW…VLCCETPRGC (105 aa)) is one Cys-rich subdomain 3 repeat. A glycan (C-linked (Man) tryptophan) is linked at Trp-1749. Positions 1849-1948 (MTSTPGSTSS…KPTPTEPSTS (100 aa)) are disordered. Composition is skewed to low complexity over residues 1850–1912 (TSTP…TFST) and 1920–1948 (ATSTSSMSTTAPGTSVVSSKPTPTEPSTS). The stretch at 1950–2050 (CLQELCTWTE…IQCCETVNVC (101 aa)) is one Cys-rich subdomain 4 repeat. A C-linked (Man) tryptophan glycan is attached at Trp-1957. A disordered region spans residues 2059–2110 (TVATTRPTPHPTGAQTQTTFTTHMPSASTEQPTATSRGGPTATSVTQGTHTT). Low complexity predominate over residues 2070-2080 (TGAQTQTTFTT). A compositionally biased stretch (polar residues) spans 2081–2110 (HMPSASTEQPTATSRGGPTATSVTQGTHTT). A Cys-rich subdomain 5 repeat occupies 2116–2220 (CHPRCTWTTW…VLCCETPKGC (105 aa)). Residue Trp-2122 is glycosylated (C-linked (Man) tryptophan). Residues 2224–2234 (STPVTAPSTPS) show a composition bias toward low complexity. Residues 2224-3214 (STPVTAPSTP…SHVSISKTTH (991 aa)) are disordered. Residues 2235–2249 (GRATSPTQSTSSWQK) are compositionally biased toward polar residues. 2 stretches are compositionally biased toward low complexity: residues 2250–3184 (SRTT…TPGP) and 3192–3214 (PTTSTASVSKTSTSHVSISKTTH). The interval 2257-3200 (TTSTTSTPQT…VPTTSTASVS (944 aa)) is 107 X 8 AA approximate tandem repeats of T-T-S-T-T-S-A-P. O-linked (GalNAc) threonine glycans are attached at residues Thr-2395, Thr-2405, Thr-2451, Thr-2461, Thr-2531, Thr-2541, Thr-2571, Thr-2581, Thr-2699, Thr-2709, Thr-2883, Thr-2893, Thr-2979, Thr-2989, Thr-3067, and Thr-3077. One copy of the Cys-rich subdomain 6 repeat lies at 3222–3326 (CHLRCTWTKW…VLCCETPKGC (105 aa)). Trp-3228 carries a C-linked (Man) tryptophan glycan. A compositionally biased stretch (low complexity) spans 3329-3340 (TSTPVTAPSTPS). A disordered region spans residues 3329–3515 (TSTPVTAPST…SVSKTTHSQP (187 aa)). The span at 3341 to 3355 (GRATSPTQSTSSWQK) shows a compositional bias: polar residues. Positions 3356 to 3513 (SRTTTLVTTS…HVSVSKTTHS (158 aa)) are enriched in low complexity. Positions 3363–3498 (TTSTTSTPQT…VTTTSTASVS (136 aa)) are 17 X 8 AA approximate tandem repeats of T-T-S-T-T-S-A-P. Residues 3520–3660 (CHPRCTWTKW…WQKSRTTTLV (141 aa)) form a Cys-rich subdomain 7 repeat. The C-linked (Man) tryptophan glycan is linked to Trp-3526. Over residues 3628-3638 (STSVTAPSTPS) the composition is skewed to low complexity. The segment at 3628 to 3951 (STSVTAPSTP…KTTHSQPVTR (324 aa)) is disordered. Positions 3639–3660 (GRATSPTQSTSSWQKSRTTTLV) are enriched in polar residues. A 34 X 8 AA approximate tandem repeats of T-T-S-T-T-S-A-P region spans residues 3661–3931 (TSSITSTTQT…VPTTSTASVS (271 aa)). The span at 3661–3946 (TSSITSTTQT…HVSVSKTTHS (286 aa)) shows a compositional bias: low complexity. An N-linked (GlcNAc...) asparagine glycan is attached at Asn-3774. One copy of the Cys-rich subdomain 8 repeat lies at 3953 to 4057 (CHPRCTWTKW…VLCCETPKGC (105 aa)). A C-linked (Man) tryptophan glycan is attached at Trp-3959. Residues 4060-4071 (TSTPVTAPSTPS) are compositionally biased toward low complexity. The disordered stretch occupies residues 4060–4625 (TSTPVTAPST…KTTHSQPVTS (566 aa)). A compositionally biased stretch (polar residues) spans 4072 to 4088 (GRATSPTQSTSSWQKSR). Residues 4089 to 4610 (TTTLVTTSTT…TTPVSKTSTS (522 aa)) are compositionally biased toward low complexity. The tract at residues 4093-4595 (VTTSTTSTPQ…TSGPGTTPSP (503 aa)) is 58 X 8 AA approximate tandem repeats of T-T-S-T-T-S-A-P. 16 O-linked (GalNAc) threonine glycosylation sites follow: Thr-4224, Thr-4234, Thr-4296, Thr-4306, Thr-4320, Thr-4330, Thr-4376, Thr-4386, Thr-4440, Thr-4450, Thr-4480, Thr-4490, Thr-4512, Thr-4522, Thr-4568, and Thr-4578. Residues 4611–4624 (HLSVSKTTHSQPVT) show a composition bias toward polar residues. A Cys-rich subdomain 9 repeat occupies 4627 to 4731 (CHPLCAWTKW…VLCCETPRGC (105 aa)). A C-linked (Man) tryptophan glycan is attached at Trp-4633. The disordered stretch occupies residues 4830–4849 (TLPPAPATSPSISTSEPVTE). The 67-residue stretch at 4852-4918 (CPNAVPPRKK…DGCCHHYQCQ (67 aa)) folds into the VWFC 2 domain. 2 N-linked (GlcNAc...) asparagine glycosylation sites follow: Asn-4869 and Asn-4942. Residues 4919–5103 (CVCSGWGDPH…VSIPDQPACH (185 aa)) enclose the VWFD 4 domain. Intrachain disulfides connect Cys-4921–Cys-5063, Cys-4943–Cys-5102, and Cys-4967–Cys-4975. N-linked (GlcNAc...) asparagine glycosylation is found at Asn-5057, Asn-5093, and Asn-5236. The region spanning 5276–5345 (PRCLGPHGEP…GQCCPQYSCA (70 aa)) is the VWFC 3 domain. N-linked (GlcNAc...) asparagine glycosylation is found at Asn-5347, Asn-5377, Asn-5386, Asn-5455, and Asn-5528. The VWFC 4 domain occupies 5381–5448 (TVCSINGTLY…QSGQCCGTCV (68 aa)). Intrachain disulfides connect Cys-5532/Cys-5582, Cys-5546/Cys-5596, Cys-5557/Cys-5612, and Cys-5561/Cys-5614. The region spanning 5532–5620 (CAVYHRSLII…ECGCMGRRCP (89 aa)) is the CTCK domain. The N-linked (GlcNAc...) asparagine glycan is linked to Asn-5591. Residues 5622–5654 (PGDTQHSEEAEPEPSQEAESGSWERGVPVSPMH) form a disordered region.

In terms of assembly, homomultimer; disulfide-linked. The N- and C-terminus mediate their assembly into higher order structures to form filaments. The CTCK domains of two polypeptides associate in the endoplasmic reticulum to generate intermolecularly disulfide-bonded dimers. These dimers progress to the Golgi apparatus, which is a more acidic environment than the endoplasmic reticulum. Under acidic conditions, the N-termini form non-covalent intermolecular interactions that juxtapose assemblies from different CTCK-linked dimers to produce long, disulfide-linked polymers that remain highly compact until secretion. In terms of processing, C-, O- and N-glycosylated. O-glycosylated on the second and last Thr of the Thr-/Ser-rich tandem repeats TTPSPVPTTSTTSA. One form of glycosylation is also known as Lewis B (LeB) blood group antigen, a tetrasaccharide consisting of N-acetylglucosamine having a fucosyl residue attached. It has a role as an epitope and antigen and functions as a receptor for H.pylori binding and facilitates infection. C-mannosylation in the Cys-rich subdomains may be required for proper folding of these regions and for export from the endoplasmic reticulum during biosynthesis. Post-translationally, proteolytic cleavage in the C-terminal is initiated early in the secretory pathway and does not involve a serine protease. The extent of cleavage is increased in the acidic parts of the secretory pathway. Cleavage generates a reactive group which could link the protein to a primary amide. Highly expressed in surface mucosal cells of respiratory tract and stomach epithelia. Overexpressed in a number of carcinomas. Also expressed in Barrett's esophagus epithelium and in the proximal duodenum.

The protein localises to the secreted. In terms of biological role, gel-forming glycoprotein of gastric and respiratory tract epithelia that protects the mucosa from infection and chemical damage by binding to inhaled microorganisms and particles that are subsequently removed by the mucociliary system. Interacts with H.pylori in the gastric epithelium, Barrett's esophagus as well as in gastric metaplasia of the duodenum (GMD). This Homo sapiens (Human) protein is Mucin-5AC.